Reading from the N-terminus, the 120-residue chain is FK506-binding protein 1B (120 aa).

Positions 1–26 are disordered; it reads MGLEKQTLRMGNGKDHPQPGDPVELN. The PPIase FKBP-type domain occupies 20-115; that stretch reads GDPVELNYTG…VFEVELLKIK (96 aa).

This sequence belongs to the FKBP-type PPIase family. FKBP1 subfamily.

It carries out the reaction [protein]-peptidylproline (omega=180) = [protein]-peptidylproline (omega=0). Its activity is regulated as follows. Inhibited by both FK506 and rapamycin. In terms of biological role, PPIases accelerate the folding of proteins. It catalyzes the cis-trans isomerization of proline imidic peptide bonds in oligopeptides. The protein is FK506-binding protein 1B (fpr1B) of Aspergillus fumigatus (strain ATCC MYA-4609 / CBS 101355 / FGSC A1100 / Af293) (Neosartorya fumigata).